A 122-amino-acid polypeptide reads, in one-letter code: Large ribosomal subunit protein uL14 (122 aa).

It belongs to the universal ribosomal protein uL14 family. In terms of assembly, part of the 50S ribosomal subunit. Forms a cluster with proteins L3 and L19. In the 70S ribosome, L14 and L19 interact and together make contacts with the 16S rRNA in bridges B5 and B8.

Functionally, binds to 23S rRNA. Forms part of two intersubunit bridges in the 70S ribosome. The polypeptide is Large ribosomal subunit protein uL14 (Granulibacter bethesdensis (strain ATCC BAA-1260 / CGDNIH1)).